Reading from the N-terminus, the 237-residue chain is Cysteine-rich venom protein DIS3 (237 aa).

A signal peptide spans 1 to 18; sequence MFVFILLSLAAVLQQSFG. The region spanning 37-165 is the SCP domain; the sequence is VDKHNAFRRS…SYDYFYVCQY (129 aa). Disulfide bonds link Cys-74–Cys-152, Cys-91–Cys-166, Cys-147–Cys-163, Cys-185–Cys-192, Cys-188–Cys-197, Cys-201–Cys-234, and Cys-219–Cys-232. The region spanning 201 to 234 is the ShKT domain; the sequence is CSREDVFTNCKSLVAKSNCQDDYIRKNCLATCFC.

Belongs to the CRISP family. Expressed by the venom gland.

The protein localises to the secreted. In terms of biological role, weakly blocks contraction of smooth muscle elicited by high potassium-induced depolarization, but does not block caffeine-stimulated contraction. May target voltage-gated calcium channels on smooth muscle. The sequence is that of Cysteine-rich venom protein DIS3 from Dispholidus typus (Boomslang).